A 434-amino-acid polypeptide reads, in one-letter code: Glutamate-1-semialdehyde 2,1-aminomutase (434 aa).

Lys-273 is modified (N6-(pyridoxal phosphate)lysine).

This sequence belongs to the class-III pyridoxal-phosphate-dependent aminotransferase family. HemL subfamily. Homodimer. The cofactor is pyridoxal 5'-phosphate.

It localises to the cytoplasm. The catalysed reaction is (S)-4-amino-5-oxopentanoate = 5-aminolevulinate. It participates in porphyrin-containing compound metabolism; protoporphyrin-IX biosynthesis; 5-aminolevulinate from L-glutamyl-tRNA(Glu): step 2/2. The protein is Glutamate-1-semialdehyde 2,1-aminomutase of Polynucleobacter asymbioticus (strain DSM 18221 / CIP 109841 / QLW-P1DMWA-1) (Polynucleobacter necessarius subsp. asymbioticus).